A 237-amino-acid chain; its full sequence is Peptidase E (237 aa).

Catalysis depends on charge relay system residues serine 122, aspartate 137, and histidine 159.

This sequence belongs to the peptidase S51 family.

It localises to the cytoplasm. The enzyme catalyses Dipeptidase E catalyzes the hydrolysis of dipeptides Asp-|-Xaa. It does not act on peptides with N-terminal Glu, Asn or Gln, nor does it cleave isoaspartyl peptides.. Its function is as follows. Hydrolyzes dipeptides containing N-terminal aspartate residues. May play a role in allowing the cell to use peptide aspartate to spare carbon otherwise required for the synthesis of the aspartate family of amino acids. This chain is Peptidase E, found in Shewanella baltica (strain OS155 / ATCC BAA-1091).